Reading from the N-terminus, the 329-residue chain is Meiotic drive suppressor wtf21 (329 aa).

Residues 1–68 form a disordered region; the sequence is MKNNYTSLKS…RENNPSRSTD (68 aa). Positions 19–30 are enriched in basic and acidic residues; the sequence is KTDHEIDLEKGP. Transmembrane regions (helical) follow at residues 73-95, 110-132, 165-182, 192-214, and 290-312; these read FLIKLLISFTPIYVLNVLAICYL, WTLFGFWCLVCTLALIFLTYFYE, IIIWILWLIICCILFVYI, ALICSTCTISAVLLLIVSSVCIP, and GIAFILGGIGNAMMGLANAIRGA.

Belongs to the WTF family. Homomer. Interacts with other proteins that exhibit high sequence similarity.

The protein localises to the spore membrane. The protein resides in the vacuole membrane. Acts as a suppressor component of the dual wtf meiotic drive system, and can suppress but not confer meiotic drive by compatible poisons. Wtf meiotic drive systems promote unequal transmission of alleles from the parental zygote to progeny spores by encoding a poison and an antidote from the same locus; the poison is trans-acting and forms toxic aggregates in all spores within an ascus, wherease the antidote is spore-specific and targets aggregates for degradation by the vacuole. Meiotic drive by wtf systems therefore lead to poisoning of all progeny that do not inherit the dual poison/antidote allele, or express a compatible antidote. This Schizosaccharomyces pombe (strain 972 / ATCC 24843) (Fission yeast) protein is Meiotic drive suppressor wtf21.